A 273-amino-acid chain; its full sequence is Spore development regulator vosA (273 aa).

Residues 66-75 (STTQELQSTQ) are compositionally biased toward low complexity. Positions 66–86 (STTQELQSTQPIAVRQQPRAA) are disordered. Residues 70–253 (ELQSTQPIAV…KEQGCIISIK (184 aa)) enclose the Velvet domain. Residues 211–218 (FPTLTEIK) carry the Nuclear localization signal motif. Residues 254–267 (KGNERARPRGADGR) are compositionally biased toward basic and acidic residues. The interval 254–273 (KGNERARPRGADGRSDDEDD) is disordered.

The protein belongs to the velvet family. VosA subfamily. In terms of assembly, forms a heterodimeric complex with velB; the formation of the velB-vosA complex is light-dependent.

It is found in the nucleus. Component of the velB-vosA heterodimeric complex that plays a dual role in activating genes associated with spore maturation and repressing certain development-associated genes. The complex binds DNA through the DNA-binding domain of vosA that recognizes an 11-nucleotide consensus sequence 5'-CTGGCCGCGGC-3' consisting of two motifs in the promoters of key developmental regulatory genes. Positively regulates the expression of wetA and represses abaA and brlA. Acts as a crucial regulator of both conidiation capacity and conidial quality. Responsible for the synthesis and accumulation of intracellular trehalose. This chain is Spore development regulator vosA, found in Beauveria bassiana (strain ARSEF 2860) (White muscardine disease fungus).